The following is a 282-amino-acid chain: Homeobox protein CDX-4 (282 aa).

Disordered regions lie at residues M13–G36 and M98–A156. Over residues S20–V29 the composition is skewed to low complexity. Polar residues-rich tracts occupy residues D110–G124 and S133–S148. Residues K171–I230 constitute a DNA-binding region (homeobox).

Belongs to the Caudal homeobox family.

It is found in the nucleus. This chain is Homeobox protein CDX-4 (Cdx4), found in Mus musculus (Mouse).